The primary structure comprises 342 residues: Dihydroorotase (342 aa).

Residues H13 and H15 each coordinate Zn(2+). Substrate-binding positions include 15 to 17 and N41; that span reads HLR. Residues K98, H135, and H173 each contribute to the Zn(2+) site. Position 98 is an N6-carboxylysine (K98). H135 is a substrate binding site. L218 is a substrate binding site. Position 246 (D246) interacts with Zn(2+). D246 is a catalytic residue. Substrate is bound by residues H250 and A262.

The protein belongs to the metallo-dependent hydrolases superfamily. DHOase family. Class II DHOase subfamily. Homodimer. Requires Zn(2+) as cofactor.

The catalysed reaction is (S)-dihydroorotate + H2O = N-carbamoyl-L-aspartate + H(+). It participates in pyrimidine metabolism; UMP biosynthesis via de novo pathway; (S)-dihydroorotate from bicarbonate: step 3/3. In terms of biological role, catalyzes the reversible cyclization of carbamoyl aspartate to dihydroorotate. The polypeptide is Dihydroorotase (Vibrio parahaemolyticus serotype O3:K6 (strain RIMD 2210633)).